Reading from the N-terminus, the 445-residue chain is Phosphoglucosamine mutase (445 aa).

Ser102 serves as the catalytic Phosphoserine intermediate. The Mg(2+) site is built by Ser102, Asp241, Asp243, and Asp245. At Ser102 the chain carries Phosphoserine.

This sequence belongs to the phosphohexose mutase family. Mg(2+) serves as cofactor. In terms of processing, activated by phosphorylation.

The enzyme catalyses alpha-D-glucosamine 1-phosphate = D-glucosamine 6-phosphate. Functionally, catalyzes the conversion of glucosamine-6-phosphate to glucosamine-1-phosphate. The chain is Phosphoglucosamine mutase from Escherichia coli (strain 55989 / EAEC).